We begin with the raw amino-acid sequence, 385 residues long: Acetate kinase (385 aa).

Asn9 is a binding site for Mg(2+). ATP is bound at residue Lys16. Position 75 (Arg75) interacts with substrate. The active-site Proton donor/acceptor is the Asp132. Residues 192 to 196 (HLGNG), 266 to 268 (DFR), and 314 to 318 (GIGEN) each bind ATP. Glu368 is a binding site for Mg(2+).

It belongs to the acetokinase family. Homodimer. Requires Mg(2+) as cofactor. Mn(2+) serves as cofactor.

It is found in the cytoplasm. It catalyses the reaction acetate + ATP = acetyl phosphate + ADP. It participates in metabolic intermediate biosynthesis; acetyl-CoA biosynthesis; acetyl-CoA from acetate: step 1/2. In terms of biological role, catalyzes the formation of acetyl phosphate from acetate and ATP. Can also catalyze the reverse reaction. This is Acetate kinase from Mycobacterium bovis (strain ATCC BAA-935 / AF2122/97).